The following is a 563-amino-acid chain: Cysteine--tRNA ligase, chloroplastic/mitochondrial (563 aa).

Cys91 provides a ligand contact to Zn(2+). Gly92 lines the L-cysteine pocket. The 'HIGH' region signature appears at 93–103 (VTAYDLSHIGH). Thr131 lines the L-cysteine pocket. Residues 136–139 (KIIA) carry the 'KIIK' region motif. Positions 271, 296, and 300 each coordinate Zn(2+). His296 serves as a coordination point for L-cysteine. Residues 328–332 (KMSKS) carry the 'KMSKS' region motif. Residue Lys331 coordinates ATP.

The protein belongs to the class-I aminoacyl-tRNA synthetase family. Requires Zn(2+) as cofactor.

Its subcellular location is the plastid. The protein resides in the chloroplast. It is found in the mitochondrion. It catalyses the reaction tRNA(Cys) + L-cysteine + ATP = L-cysteinyl-tRNA(Cys) + AMP + diphosphate. Functionally, required for female gametophyte development. Is necessary for the fusion of central cell nuclei and programmed cell death (PCD) of the antipodals. In Arabidopsis thaliana (Mouse-ear cress), this protein is Cysteine--tRNA ligase, chloroplastic/mitochondrial.